Reading from the N-terminus, the 267-residue chain is EFGGSAVRSLPVEARLTLCNLAVEFSAFSGIVAPDDTVFEYLAGRPYAPAGAQWEPALWHWRSLYSDADAVFDRELSVDCRQLAPMVTWGTSPQHGVAVDGAVPNPAMAIDADTRQAMERALSYMDLRPGQRMADIAIDAAFIGSCTNSRLSDLRSAAGVLAGRKVAPGVTAICVPVSSAVKRAAEAEGLDRVFREAGFEWRESGCSMCFYAGGESFGHRQRVISSTNRNFESRQGPQTRTHLAGPATVAASAVLGRIADPRRPPGA.

Residues C146, C206, and C209 each coordinate [4Fe-4S] cluster.

It belongs to the aconitase/IPM isomerase family. LeuC type 1 subfamily. In terms of assembly, heterodimer of LeuC and LeuD. [4Fe-4S] cluster is required as a cofactor.

It catalyses the reaction (2R,3S)-3-isopropylmalate = (2S)-2-isopropylmalate. Its pathway is amino-acid biosynthesis; L-leucine biosynthesis; L-leucine from 3-methyl-2-oxobutanoate: step 2/4. Its function is as follows. Catalyzes the isomerization between 2-isopropylmalate and 3-isopropylmalate, via the formation of 2-isopropylmaleate. In Cupriavidus necator (Alcaligenes eutrophus), this protein is 3-isopropylmalate dehydratase large subunit (leuC).